A 3301-amino-acid chain; its full sequence is Cadherin EGF LAG seven-pass G-type receptor 3 (3301 aa).

A signal peptide spans M1–E31. Over E32 to A2531 the chain is Extracellular. Disordered regions lie at residues L148–S189 and K202–P314. Basic residues predominate over residues M267–R276. 9 consecutive Cadherin domains span residues P317–F424, E425–F536, S537–F642, V643–F747, T748–F849, Q850–F952, V953–F1058, P1059–L1160, and N1161–I1257. An N-linked (GlcNAc...) asparagine glycan is attached at N623. Residue N838 is glycosylated (N-linked (GlcNAc...) asparagine). 4 N-linked (GlcNAc...) asparagine glycosylation sites follow: N1173, N1213, N1308, and N1318. The region spanning D1366–E1424 is the EGF-like 1; calcium-binding domain. Disulfide bonds link C1370–C1381, C1375–C1412, C1414–C1423, C1430–C1441, C1435–C1450, C1452–C1459, C1468–C1479, C1473–C1489, and C1491–C1502. The EGF-like 2; calcium-binding domain maps to E1426–E1460. In terms of domain architecture, EGF-like 3; calcium-binding spans E1464 to E1503. Residues V1504–C1708 form the Laminin G-like 1 domain. N-linked (GlcNAc...) asparagine glycosylation is found at N1638 and N1702. Cystine bridges form between C1682–C1708, C1715–C1726, C1720–C1735, and C1737–C1746. Residues K1711–R1747 enclose the EGF-like 4; calcium-binding domain. The Laminin G-like 2 domain maps to A1751–C1933. N1759 is a glycosylation site (N-linked (GlcNAc...) asparagine). Disulfide bonds link C1904-C1933, C1939-C1950, C1944-C1959, C1961-C1970, C1974-C1985, C1979-C1997, C1999-C2008, C2016-C2029, and C2031-C2041. The region spanning V1935 to V1971 is the EGF-like 5; calcium-binding domain. D1952 carries the post-translational modification (3R)-3-hydroxyaspartate. The EGF-like 6; calcium-binding domain maps to D1972 to G2002. Residues Y2003–N2042 enclose the EGF-like 7; calcium-binding domain. N2042 is a glycosylation site (N-linked (GlcNAc...) asparagine). The 36-residue stretch at T2044 to A2079 folds into the EGF-like 8; calcium-binding domain. Intrachain disulfides connect C2048-C2063, C2050-C2066, C2068-C2078, C2087-C2096, and C2099-C2111. The region spanning C2066–V2113 is the Laminin EGF-like domain. At Y2115 the chain carries Phosphotyrosine. N-linked (GlcNAc...) asparagine glycosylation is found at N2166, N2185, N2375, N2465, and N2497. The segment at L2353–L2388 is disordered. The span at P2355 to S2383 shows a compositional bias: low complexity. Positions Q2357–E2521 constitute a GAIN-B domain. Intrachain disulfides connect C2471–C2503 and C2491–C2505. Residues C2471 to E2521 form a GPS region. Residues V2532–L2552 traverse the membrane as a helical segment. Residues L2553–R2563 lie on the Cytoplasmic side of the membrane. The helical transmembrane segment at G2564–I2584 threads the bilayer. Residues H2585–L2592 are Extracellular-facing. Residues C2593–V2613 traverse the membrane as a helical segment. At Q2614–R2634 the chain is on the cytoplasmic side. The chain crosses the membrane as a helical span at residues F2635–D2655. Residues P2656 to L2673 lie on the Extracellular side of the membrane. Residues I2674 to L2694 traverse the membrane as a helical segment. Over A2695–R2716 the chain is Cytoplasmic. A helical transmembrane segment spans residues S2717–N2737. Residues H2738 to H2744 are Extracellular-facing. Residues Y2745–L2765 form a helical membrane-spanning segment. Over N2766–S3301 the chain is Cytoplasmic. Disordered regions lie at residues S2823–D2844, A2879–R2919, and S2969–G2992. The segment covering A2881–L2891 has biased composition (acidic residues). Basic residues predominate over residues T2910–R2919. Y3042 is subject to Phosphotyrosine. A disordered region spans residues A3083 to S3301. S3090 is modified (phosphoserine). Basic and acidic residues predominate over residues S3094–G3111. Composition is skewed to low complexity over residues S3168–R3189 and L3239–S3261. Polar residues predominate over residues T3276–S3289.

Belongs to the G-protein coupled receptor 2 family. LN-TM7 subfamily. In terms of tissue distribution, expressed in the CNS and in the eye.

The protein localises to the cell membrane. In terms of biological role, receptor that may have an important role in cell/cell signaling during nervous system formation. This Mus musculus (Mouse) protein is Cadherin EGF LAG seven-pass G-type receptor 3 (Celsr3).